The primary structure comprises 224 residues: ATP-dependent Clp protease proteolytic subunit 1 (224 aa).

The active-site Nucleophile is Ser-120. Residue His-145 is part of the active site.

It belongs to the peptidase S14 family. As to quaternary structure, fourteen ClpP subunits assemble into 2 heptameric rings which stack back to back to give a disk-like structure with a central cavity, resembling the structure of eukaryotic proteasomes.

It is found in the cytoplasm. The catalysed reaction is Hydrolysis of proteins to small peptides in the presence of ATP and magnesium. alpha-casein is the usual test substrate. In the absence of ATP, only oligopeptides shorter than five residues are hydrolyzed (such as succinyl-Leu-Tyr-|-NHMec, and Leu-Tyr-Leu-|-Tyr-Trp, in which cleavage of the -Tyr-|-Leu- and -Tyr-|-Trp bonds also occurs).. Functionally, cleaves peptides in various proteins in a process that requires ATP hydrolysis. Has a chymotrypsin-like activity. Plays a major role in the degradation of misfolded proteins. This is ATP-dependent Clp protease proteolytic subunit 1 from Prochlorococcus marinus (strain MIT 9313).